The primary structure comprises 422 residues: MDYKQFFSNFRYLSSSKGIGGKIKSKPEDFIVREVIPRSVFRSDQCLIYLIKKQNWETMAAIKEIAKRIGIDYKNVGFAGTKDRHAITYQYISICSENLESIKESIASLNIEGISLKFVGRGKPLKLGMLIGNHFQIILRGLEDPERALERTKKILKELKLKGGFPNYFGSQRFGERRVINHEVGKLLLKGDFEGAALKFLGEYTGDMTGDEARKDFLKTGDVEKALEEFPNFLRYERAMLYKYRETRSWKKAFAVLPRPIVRIFIHSYQSYLFNKALSRRIEEGLSLNEALSGDIVCQVKKGLPIRNKTFKVTERSLKFVNERVKRGEAMVTGPVFGFASRLADGPMGKIEREILDEEGIDLNGFKMKQLPILAEAGGRRELLIKPRGFKYKSSEEGLIFRFFLPKGVYATSVMREIMKDH.

The Nucleophile role is filled by Asp83. The region spanning 164 to 386 is the TRUD domain; that stretch reads GFPNYFGSQR…AGGRRELLIK (223 aa).

This sequence belongs to the pseudouridine synthase TruD family.

The enzyme catalyses uridine(13) in tRNA = pseudouridine(13) in tRNA. Functionally, could be responsible for synthesis of pseudouridine from uracil-13 in transfer RNAs. This is Probable tRNA pseudouridine synthase D from Thermococcus sibiricus (strain DSM 12597 / MM 739).